Reading from the N-terminus, the 92-residue chain is Cell division protein FtsB (92 aa).

Over 1-3 the chain is Cytoplasmic; sequence MKW. The chain crosses the membrane as a helical span at residues 4 to 21; that stretch reads VTVVLSFALVCCQYSLWF. The Periplasmic portion of the chain corresponds to 22–92; the sequence is GKGSIGRNSS…TFYRLIRHNR (71 aa). The stretch at 28-50 forms a coiled coil; the sequence is RNSSLREQIAVQEEKNQTLALRN.

This sequence belongs to the FtsB family. In terms of assembly, part of a complex composed of FtsB, FtsL and FtsQ.

The protein resides in the cell inner membrane. Functionally, essential cell division protein. May link together the upstream cell division proteins, which are predominantly cytoplasmic, with the downstream cell division proteins, which are predominantly periplasmic. This chain is Cell division protein FtsB, found in Neisseria meningitidis serogroup C (strain 053442).